Here is a 62-residue protein sequence, read N- to C-terminus: Large ribosomal subunit protein bL28 (62 aa).

It belongs to the bacterial ribosomal protein bL28 family.

This Helicobacter pylori (strain P12) protein is Large ribosomal subunit protein bL28.